The primary structure comprises 453 residues: Bifunctional protein GlmU (453 aa).

Residues 1–231 (MERTCLAIIL…EVEMTGCNNR (231 aa)) are pyrophosphorylase. UDP-N-acetyl-alpha-D-glucosamine contacts are provided by residues 10–13 (LAAG), K24, Q77, 82–83 (GT), 105–107 (YGD), G143, E157, N172, and N229. D107 is a Mg(2+) binding site. A Mg(2+)-binding site is contributed by N229. Residues 232–252 (AELAFIERLWQERRRHELMLS) form a linker region. The N-acetyltransferase stretch occupies residues 253–453 (GVTMIAPETV…AIKAAKKGSH (201 aa)). UDP-N-acetyl-alpha-D-glucosamine-binding residues include R318 and K336. The active-site Proton acceptor is H348. Positions 351 and 362 each coordinate UDP-N-acetyl-alpha-D-glucosamine. Acetyl-CoA contacts are provided by residues A365, 371 to 372 (NY), S390, S408, and R425.

The protein in the N-terminal section; belongs to the N-acetylglucosamine-1-phosphate uridyltransferase family. It in the C-terminal section; belongs to the transferase hexapeptide repeat family. Homotrimer. Requires Mg(2+) as cofactor.

It localises to the cytoplasm. It carries out the reaction alpha-D-glucosamine 1-phosphate + acetyl-CoA = N-acetyl-alpha-D-glucosamine 1-phosphate + CoA + H(+). The enzyme catalyses N-acetyl-alpha-D-glucosamine 1-phosphate + UTP + H(+) = UDP-N-acetyl-alpha-D-glucosamine + diphosphate. It participates in nucleotide-sugar biosynthesis; UDP-N-acetyl-alpha-D-glucosamine biosynthesis; N-acetyl-alpha-D-glucosamine 1-phosphate from alpha-D-glucosamine 6-phosphate (route II): step 2/2. Its pathway is nucleotide-sugar biosynthesis; UDP-N-acetyl-alpha-D-glucosamine biosynthesis; UDP-N-acetyl-alpha-D-glucosamine from N-acetyl-alpha-D-glucosamine 1-phosphate: step 1/1. It functions in the pathway bacterial outer membrane biogenesis; LPS lipid A biosynthesis. In terms of biological role, catalyzes the last two sequential reactions in the de novo biosynthetic pathway for UDP-N-acetylglucosamine (UDP-GlcNAc). The C-terminal domain catalyzes the transfer of acetyl group from acetyl coenzyme A to glucosamine-1-phosphate (GlcN-1-P) to produce N-acetylglucosamine-1-phosphate (GlcNAc-1-P), which is converted into UDP-GlcNAc by the transfer of uridine 5-monophosphate (from uridine 5-triphosphate), a reaction catalyzed by the N-terminal domain. This is Bifunctional protein GlmU from Rhizobium rhizogenes (strain K84 / ATCC BAA-868) (Agrobacterium radiobacter).